The chain runs to 116 residues: Putative UPF0320 protein YJR162C (116 aa).

It belongs to the UPF0320 family.

This Saccharomyces cerevisiae (strain ATCC 204508 / S288c) (Baker's yeast) protein is Putative UPF0320 protein YJR162C.